The sequence spans 907 residues: Clumping factor B (907 aa).

An N-terminal signal peptide occupies residues 1–44 (MKKRIDYLSNKQNKYSIRRFTVGTTSVIVGATILFGIGNHQAQA). The YSIRK-G/S signaling motif motif lies at 15–26 (YSIRRFTVGTTS). 2 stretches are compositionally biased toward polar residues: residues 44–61 (ASEQ…NASA) and 68–101 (MIET…KPMS). The disordered stretch occupies residues 44 to 191 (ASEQSNDTTQ…AQGTSKPSVR (148 aa)). The interval 45 to 542 (SEQSNDTTQS…GSADGDSAVN (498 aa)) is ligand binding A region. Residues 102 to 119 (TQTSNTTTTEPASTNETP) show a composition bias toward low complexity. A compositionally biased stretch (polar residues) spans 134 to 189 (QDQTVPQEANSQVDNKTTNDANSIATNSELKNPQTLDLPQSSPQTISNAQGTSKPS). Residues 272–276 (DYSNS) carry the MIDAS-like motif motif. The segment at 530–879 (YGGGSADGDS…ETGDKSENTN (350 aa)) is disordered. The span at 545 to 555 (DPTPGPPVDPE) shows a compositional bias: pro residues. Positions 556–831 (PSPDPEPEPS…SDSDSDSDSD (276 aa)) are enriched in acidic residues. Residues 835 to 846 (RVTPPNNEQKAP) are compositionally biased toward polar residues. Positions 863 to 876 (HKTDALPETGDKSE) are enriched in basic and acidic residues. The LPXTG sorting signal motif lies at 868–872 (LPETG). The residue at position 871 (T871) is a Pentaglycyl murein peptidoglycan amidated threonine. Positions 872 to 907 (GDKSENTNATLFGAMMALLGSLLLFRKRKQDHKEKA) are cleaved as a propeptide — removed by sortase.

It belongs to the serine-aspartate repeat-containing protein (SDr) family. In terms of processing, proteolytically cleaved by aureolysin (aur). This cleavage leads to the inactivation of ClfB.

The protein localises to the secreted. The protein resides in the cell wall. In terms of biological role, cell surface-associated protein implicated in virulence by promoting bacterial attachment to both alpha- and beta-chains of human fibrinogen and inducing the formation of bacterial clumps. The chain is Clumping factor B (clfB) from Staphylococcus aureus (strain MW2).